We begin with the raw amino-acid sequence, 83 residues long: MAVCIRLARGGKKKKPVYSVVVADKRMARDGRFLEKLGQYIPMKEGGTFAINQERYAHWISQGAKPSETVGKLVAKQQNAAEA.

This sequence belongs to the bacterial ribosomal protein bS16 family.

This Magnetococcus marinus (strain ATCC BAA-1437 / JCM 17883 / MC-1) protein is Small ribosomal subunit protein bS16.